Here is a 235-residue protein sequence, read N- to C-terminus: Large ribosomal subunit protein uL4 (235 aa).

The segment at 45-75 (RAGTASTKTRGEVSGGGRKPWPQKHTGRARH) is disordered. Residues 65–75 (WPQKHTGRARH) show a composition bias toward basic residues.

This sequence belongs to the universal ribosomal protein uL4 family. As to quaternary structure, part of the 50S ribosomal subunit.

Its function is as follows. One of the primary rRNA binding proteins, this protein initially binds near the 5'-end of the 23S rRNA. It is important during the early stages of 50S assembly. It makes multiple contacts with different domains of the 23S rRNA in the assembled 50S subunit and ribosome. Functionally, forms part of the polypeptide exit tunnel. The sequence is that of Large ribosomal subunit protein uL4 from Thermotoga petrophila (strain ATCC BAA-488 / DSM 13995 / JCM 10881 / RKU-1).